We begin with the raw amino-acid sequence, 200 residues long: Lipopolysaccharide core heptose(II)-phosphate phosphatase (200 aa).

The first 25 residues, 1 to 25 (MLAFCRSSLKSKKYFIILLALAAIA), serve as a signal peptide directing secretion.

Belongs to the phosphoglycerate mutase family. Ais subfamily.

It localises to the periplasm. It participates in bacterial outer membrane biogenesis; lipopolysaccharide metabolism. In terms of biological role, catalyzes the dephosphorylation of heptose(II) of the outer membrane lipopolysaccharide core. The sequence is that of Lipopolysaccharide core heptose(II)-phosphate phosphatase from Escherichia coli O6:K15:H31 (strain 536 / UPEC).